The following is a 142-amino-acid chain: Large ribosomal subunit protein uL11 (142 aa).

This sequence belongs to the universal ribosomal protein uL11 family. In terms of assembly, part of the ribosomal stalk of the 50S ribosomal subunit. Interacts with L10 and the large rRNA to form the base of the stalk. L10 forms an elongated spine to which L12 dimers bind in a sequential fashion forming a multimeric L10(L12)X complex. One or more lysine residues are methylated.

In terms of biological role, forms part of the ribosomal stalk which helps the ribosome interact with GTP-bound translation factors. The polypeptide is Large ribosomal subunit protein uL11 (Rhodospirillum rubrum (strain ATCC 11170 / ATH 1.1.1 / DSM 467 / LMG 4362 / NCIMB 8255 / S1)).